An 86-amino-acid polypeptide reads, in one-letter code: Sodium channel neurotoxin MeuNaTxalpha-4 (86 aa).

An N-terminal signal peptide occupies residues 1-19 (MNYLILISFALLVITGVES). The 65-residue stretch at 21–85 (RDAYIAKPHN…VPIRIPGKCH (65 aa)) folds into the LCN-type CS-alpha/beta domain. Cystine bridges form between Cys31-Cys84, Cys35-Cys57, Cys43-Cys67, and Cys47-Cys69. A propeptide (removed by a carboxypeptidase) is located at residue Arg86.

The protein belongs to the long (4 C-C) scorpion toxin superfamily. Sodium channel inhibitor family. Alpha subfamily. As to expression, expressed by the venom gland.

It is found in the secreted. Functionally, alpha toxins bind voltage-independently at site-3 of sodium channels (Nav) and inhibit the inactivation of the activated channels, thereby blocking neuronal transmission. This toxin inhibits inactivation of drosophila DmNav1 (EC(50)=130 nM). This chain is Sodium channel neurotoxin MeuNaTxalpha-4, found in Mesobuthus eupeus (Lesser Asian scorpion).